The following is a 393-amino-acid chain: NAD(P)H-quinone oxidoreductase subunit H, chloroplastic (393 aa).

This sequence belongs to the complex I 49 kDa subunit family. As to quaternary structure, NDH is composed of at least 16 different subunits, 5 of which are encoded in the nucleus.

It is found in the plastid. It localises to the chloroplast thylakoid membrane. The enzyme catalyses a plastoquinone + NADH + (n+1) H(+)(in) = a plastoquinol + NAD(+) + n H(+)(out). The catalysed reaction is a plastoquinone + NADPH + (n+1) H(+)(in) = a plastoquinol + NADP(+) + n H(+)(out). NDH shuttles electrons from NAD(P)H:plastoquinone, via FMN and iron-sulfur (Fe-S) centers, to quinones in the photosynthetic chain and possibly in a chloroplast respiratory chain. The immediate electron acceptor for the enzyme in this species is believed to be plastoquinone. Couples the redox reaction to proton translocation, and thus conserves the redox energy in a proton gradient. The polypeptide is NAD(P)H-quinone oxidoreductase subunit H, chloroplastic (Amborella trichopoda).